The sequence spans 153 residues: Ribosome maturation factor RimP (153 aa).

It belongs to the RimP family.

Its subcellular location is the cytoplasm. Required for maturation of 30S ribosomal subunits. This Chromohalobacter salexigens (strain ATCC BAA-138 / DSM 3043 / CIP 106854 / NCIMB 13768 / 1H11) protein is Ribosome maturation factor RimP.